A 75-amino-acid polypeptide reads, in one-letter code: Large ribosomal subunit protein bL31 (75 aa).

Residues C16, C18, C37, and C40 each contribute to the Zn(2+) site.

The protein belongs to the bacterial ribosomal protein bL31 family. Type A subfamily. In terms of assembly, part of the 50S ribosomal subunit. The cofactor is Zn(2+).

Its function is as follows. Binds the 23S rRNA. This is Large ribosomal subunit protein bL31 from Pseudomonas syringae pv. tomato (strain ATCC BAA-871 / DC3000).